Here is a 368-residue protein sequence, read N- to C-terminus: Glutamate 5-kinase (368 aa).

Lys-18 is a binding site for ATP. Ser-58, Asp-145, and Asn-157 together coordinate substrate. ATP is bound by residues 177-178 (SD) and 218-224 (TGGMASK). The PUA domain occupies 280-358 (AGSLTLDEGA…SELPGELRRP (79 aa)).

This sequence belongs to the glutamate 5-kinase family.

It is found in the cytoplasm. It carries out the reaction L-glutamate + ATP = L-glutamyl 5-phosphate + ADP. Its pathway is amino-acid biosynthesis; L-proline biosynthesis; L-glutamate 5-semialdehyde from L-glutamate: step 1/2. Functionally, catalyzes the transfer of a phosphate group to glutamate to form L-glutamate 5-phosphate. This is Glutamate 5-kinase from Mycobacterium ulcerans (strain Agy99).